Consider the following 216-residue polypeptide: LexA repressor (216 aa).

A DNA-binding region (H-T-H motif) is located at residues 28 to 48 (RAEIAAEFGFSSPNAAEEHLR). Residues S134 and K171 each act as for autocatalytic cleavage activity in the active site.

It belongs to the peptidase S24 family. In terms of assembly, homodimer.

The enzyme catalyses Hydrolysis of Ala-|-Gly bond in repressor LexA.. Represses a number of genes involved in the response to DNA damage (SOS response), including recA and lexA. In the presence of single-stranded DNA, RecA interacts with LexA causing an autocatalytic cleavage which disrupts the DNA-binding part of LexA, leading to derepression of the SOS regulon and eventually DNA repair. The protein is LexA repressor of Ralstonia nicotianae (strain ATCC BAA-1114 / GMI1000) (Ralstonia solanacearum).